Consider the following 197-residue polypeptide: Transmembrane protein 126A (197 aa).

Residues Met-1–Glu-35 lie on the Mitochondrial matrix side of the membrane. Residues Asn-36–Phe-56 form a helical membrane-spanning segment. The Mitochondrial intermembrane segment spans residues Arg-57 to Arg-58. The chain crosses the membrane as a helical span at residues Ile-59–Leu-79. At Thr-80–Arg-107 the chain is on the mitochondrial matrix side. A helical membrane pass occupies residues Gly-108 to Asn-128. The Mitochondrial intermembrane segment spans residues Gly-129 to Lys-160. A helical membrane pass occupies residues Met-161–Ser-177. Topologically, residues Arg-178–Glu-197 are mitochondrial matrix.

The protein belongs to the TMEM126 family. In terms of assembly, interacts with OXA1L; promoting cotranslational quality control in mitochondria.

It localises to the mitochondrion inner membrane. Its function is as follows. Protein required for the cotranslational protein quality control in the inner membrane of the mitochondria. Associates with newly synthesized polypeptides and may act as a chaperone that cooperates with OXA1L for the insertion of newly synthesized mitochondrial proteins into the inner membrane. Required for the assembly of the ND4 module of mitochondrial complex I. The protein is Transmembrane protein 126A (TMEM126A) of Bos taurus (Bovine).